Here is a 343-residue protein sequence, read N- to C-terminus: Coiled-coil domain-containing protein 97 (343 aa).

Met-1 carries the post-translational modification N-acetylmethionine. Positions 1 to 37 are disordered; it reads MEAVATATAAKEPDKGCIEPGPGHWGELSRTPVPSKP. Thr-47 bears the Phosphothreonine mark. Disordered stretches follow at residues 200-220, 234-277, and 292-343; these read ARTP…ACPL, QQRL…DSEE, and RFLD…LDGD. A coiled-coil region spans residues 224 to 262; that stretch reads LLQSYEERELQQRLLQQQEEEEACLEEEEEEEDSDEEDQ. Over residues 241–261 the composition is skewed to acidic residues; it reads QEEEEACLEEEEEEEDSDEED. A compositionally biased stretch (basic and acidic residues) spans 262-277; the sequence is QRSGKDSEAWVPDSEE. 2 positions are modified to phosphoserine: Ser-275 and Ser-337. Acidic residues predominate over residues 324 to 343; sequence ERYFDEEEPEDAPSPELDGD.

In terms of assembly, associates with splicing factor SF3B complex, involved in branch-site recognition.

The protein localises to the nucleus. Functionally, may play a role pre-mRNA splicing through the association with the splicing factor SF3B complex which is involved in branch-site recognition. In Homo sapiens (Human), this protein is Coiled-coil domain-containing protein 97 (CCDC97).